A 299-amino-acid polypeptide reads, in one-letter code: Centriolar and ciliogenesis-associated protein HYLS1 (299 aa).

A Phosphoserine modification is found at Ser-179.

The protein belongs to the HYLS1 family.

The protein resides in the cytoplasm. It localises to the cell projection. It is found in the cilium. The protein localises to the cytoskeleton. Its subcellular location is the microtubule organizing center. The protein resides in the centrosome. It localises to the centriole. Functionally, plays a role in ciliogenesis. This is Centriolar and ciliogenesis-associated protein HYLS1 from Homo sapiens (Human).